The chain runs to 906 residues: Peroxisomal hydratase-dehydrogenase-epimerase (906 aa).

Short-chain dehydrogenase like stretches follow at residues 5-228 (DFKD…SSAE) and 319-532 (SLKD…GTDD). NADP(+)-binding residues include Ile-13, Lys-52, Asn-98, and Lys-131. Catalysis depends on proton donor residues Ser-149 and Tyr-163. The NADP(+) site is built by Tyr-163 and Lys-167. The active-site Proton acceptor is Tyr-163. Lys-167 acts as the Lowers pKa of active site Tyr in catalysis. Tyr-467 acts as the Proton acceptor in catalysis. A disordered region spans residues 600–633 (AVGGDDDDDDEDEEEDEGDEEEDEEDEEEDDPVW). Acidic residues predominate over residues 603–630 (GDDDDDDEDEEEDEGDEEEDEEDEEEDD). Positions 699, 700, 729, 757, 808, 810, 831, 856, 857, and 858 each coordinate (3R)-3-hydroxydecanoyl-CoA. One can recognise a MaoC-like domain in the interval 782–893 (APKRAPDYQV…VVDRGTIAIN (112 aa)). Positions 904 to 906 (AKI) match the Microbody targeting signal motif.

It belongs to the short-chain dehydrogenases/reductases (SDR) family. Monomer.

It is found in the peroxisome. It carries out the reaction a (3R)-3-hydroxyacyl-CoA = a (2E)-enoyl-CoA + H2O. The catalysed reaction is a (3R)-3-hydroxyacyl-CoA + NAD(+) = a 3-oxoacyl-CoA + NADH + H(+). It participates in lipid metabolism; fatty acid beta-oxidation. In terms of biological role, second trifunctional enzyme acting on the beta-oxidation pathway for fatty acids, possessing hydratase-dehydrogenase-epimerase activities. Converts trans-2-enoyl-CoA via D-3-hydroxyacyl-CoA to 3-ketoacyl-CoA. The sequence is that of Peroxisomal hydratase-dehydrogenase-epimerase from Candida tropicalis (Yeast).